The following is a 78-amino-acid chain: Short neurotoxin SNTX14 (78 aa).

A signal peptide spans 1–21 (MKTLLLTFLVVTIVCLDLGYT). 4 disulfide bridges follow: cysteine 24–cysteine 40, cysteine 33–cysteine 58, cysteine 62–cysteine 70, and cysteine 71–cysteine 76.

Belongs to the three-finger toxin family. Short-chain subfamily. As to expression, expressed by the venom gland.

The protein resides in the secreted. Functionally, this three-finger toxin binds and inhibits the nicotinic acetylcholine receptor (nAChR). This chain is Short neurotoxin SNTX14, found in Ophiophagus hannah (King cobra).